We begin with the raw amino-acid sequence, 311 residues long: Olfactory receptor 5L1 (311 aa).

Residues 1–25 (MGKENCTTVAEFILLGLSDVPELRV) lie on the Extracellular side of the membrane. Asn-5 carries an N-linked (GlcNAc...) asparagine glycan. The helical transmembrane segment at 26–46 (CLFLLFLLIYGVTLLANLGMI) threads the bilayer. Residues 47-54 (ALIQVSSR) lie on the Cytoplasmic side of the membrane. Residues 55–75 (LHTPMYFFLSHLSSVDFCYSS) traverse the membrane as a helical segment. Topologically, residues 76 to 99 (IIVPKMLANIFNKDKAISFLGCMV) are extracellular. Cys-97 and Cys-189 are disulfide-bonded. A helical transmembrane segment spans residues 100–120 (QFYLFCTCVVTEVFLLAVMAY). The Cytoplasmic portion of the chain corresponds to 121–139 (DRFVAICNPLLYTVTMSWK). The helical transmembrane segment at 140–160 (VRVELASCCYFCGTVCSLIHL) threads the bilayer. Topologically, residues 161 to 196 (CLALRIPFYRSNVINHFFCDLPPVLSLACSDITVNE) are extracellular. N-linked (GlcNAc...) asparagine glycosylation is present at Asn-195. A helical transmembrane segment spans residues 197–217 (TLLFLVATLNESVTIMIILTS). Residues 218–237 (YLLILTTILKMGSAEGRHKA) are Cytoplasmic-facing. Residues 238–258 (FSTCASHLTAITVFHGTVLSI) traverse the membrane as a helical segment. Residues 259–271 (YCRPSSGNSGDAD) are Extracellular-facing. A helical transmembrane segment spans residues 272–292 (KVATVFYTVVIPMLNSVIYSL). Topologically, residues 293 to 311 (RNKDVKEALRKVMGSKIHS) are cytoplasmic.

It belongs to the G-protein coupled receptor 1 family.

The protein resides in the cell membrane. Its function is as follows. Odorant receptor. The chain is Olfactory receptor 5L1 (OR5L1) from Homo sapiens (Human).